We begin with the raw amino-acid sequence, 258 residues long: Probable N-acetylglucosaminyl-phosphatidylinositol de-N-acetylase (258 aa).

A disordered region spans residues 147–170; that stretch reads KSSSTTTTSTTSSSSSSSSLSNRT. Over residues 148–170 the composition is skewed to low complexity; sequence SSSTTTTSTTSSSSSSSSLSNRT.

It belongs to the PIGL family.

The protein resides in the endoplasmic reticulum membrane. It carries out the reaction a 6-(N-acetyl-alpha-D-glucosaminyl)-1-(1,2-diacyl-sn-glycero-3-phospho)-1D-myo-inositol + H2O = a 6-(alpha-D-glucosaminyl)-1-(1,2-diacyl-sn-glycero-3-phospho)-1D-myo-inositol + acetate. The protein operates within glycolipid biosynthesis; glycosylphosphatidylinositol-anchor biosynthesis. Functionally, involved in the second step of GPI biosynthesis. De-N-acetylation of N-acetylglucosaminyl-phosphatidylinositol. The protein is Probable N-acetylglucosaminyl-phosphatidylinositol de-N-acetylase (pigl) of Dictyostelium discoideum (Social amoeba).